The sequence spans 514 residues: Maltose/maltodextrin transport system permease protein MalF (514 aa).

Topologically, residues 1 to 16 (MDVIKKKHWWQSDALK) are cytoplasmic. A helical transmembrane segment spans residues 17–36 (WSVLGLLGLLVGYLVVLMYA). At 37–39 (QGE) the chain is on the periplasmic side. The chain crosses the membrane as a helical span at residues 40 to 58 (YLFAITTLILSSAGLYIFA). The Cytoplasmic segment spans residues 59–66 (NRKAYAWR). Residues 67–92 (YVYPGMAGMGLFVLFPLVCTIAIAFT) traverse the membrane as a helical segment. Over 93–275 (NYSSTNQLTF…RVFTDEGIQK (183 aa)) the chain is Periplasmic. Residues 276–306 (PFLAIFVWTVVFSLITVFLTVAVGMVLACLV) form a helical membrane-spanning segment. One can recognise an ABC transmembrane type-1 domain in the interval 281-505 (FVWTVVFSLI…LLVGALAIVN (225 aa)). Residues 307–318 (QWEALRGKAVYR) are Cytoplasmic-facing. The chain crosses the membrane as a helical span at residues 319-336 (VLLILPYAVPSFISILIF). Residues 337 to 369 (KGLFNQSFGEINMMLSALFGVKPAWFSDPTTAR) lie on the Periplasmic side of the membrane. The helical transmembrane segment at 370-392 (TMLIIVNTWLGYPYMMILCMGLL) threads the bilayer. Over 393–425 (KAIPDDLYEASAMDGAGPFQNFFKITLPLLIKP) the chain is Cytoplasmic. A helical membrane pass occupies residues 426-452 (LTPLMIASFAFNFNNFVLIQLLTNGGP). The Periplasmic portion of the chain corresponds to 453–483 (DRLGTTTPAGYTDLLVNYTYRIAFEGGGGQD). The helical transmembrane segment at 484 to 505 (FGLAAAIATLIFLLVGALAIVN) threads the bilayer. The Cytoplasmic portion of the chain corresponds to 506-514 (LKATRMKFD).

The protein belongs to the binding-protein-dependent transport system permease family. MalFG subfamily. In terms of assembly, the complex is composed of two ATP-binding proteins (MalK), two transmembrane proteins (MalG and MalF) and a solute-binding protein (MalE). Protein stability and stable complex formation require YidC.

It is found in the cell inner membrane. Functionally, part of the ABC transporter complex MalEFGK involved in maltose/maltodextrin import. Probably responsible for the translocation of the substrate across the membrane. This chain is Maltose/maltodextrin transport system permease protein MalF, found in Escherichia coli (strain K12).